The following is a 396-amino-acid chain: Protein GTS1 (396 aa).

Residues 14-141 (DRELKELINS…FRYDEIKPED (128 aa)) enclose the Arf-GAP domain. Residues 30 to 53 (CGECGNFYPTWCSVNLGVFLCGRC) form a C4-type zinc finger. Residues 148–161 (DFDGESDRFDERNR) are compositionally biased toward basic and acidic residues. Disordered regions lie at residues 148–194 (DFDG…SGSR) and 233–266 (KSSS…QPAI). At Ser153 the chain carries Phosphoserine. Position 181 is a phosphotyrosine (Tyr181). 2 positions are modified to phosphoserine: Ser184 and Ser187. In terms of domain architecture, UBA spans 193–234 (SRYSRQLAELKDMGFGDTNKNLDALSSAHGNINRAIDYLEKS). Positions 234-249 (SSSSRNSVSAAATTST) are enriched in low complexity. A Phosphoserine modification is found at Ser240. Thr249 carries the phosphothreonine modification.

It localises to the nucleus. Its function is as follows. Appears to modulate the timing of budding to obtain an appropriate cell size independent of the DNA replication cycle. Transcription factor involved in both heat resistance and flocculation. In Saccharomyces cerevisiae (strain ATCC 204508 / S288c) (Baker's yeast), this protein is Protein GTS1 (GTS1).